The following is a 230-amino-acid chain: Urease accessory protein UreF (230 aa).

It belongs to the UreF family. As to quaternary structure, ureD, UreF and UreG form a complex that acts as a GTP-hydrolysis-dependent molecular chaperone, activating the urease apoprotein by helping to assemble the nickel containing metallocenter of UreC. The UreE protein probably delivers the nickel.

It is found in the cytoplasm. Its function is as follows. Required for maturation of urease via the functional incorporation of the urease nickel metallocenter. The chain is Urease accessory protein UreF from Cupriavidus metallidurans (strain ATCC 43123 / DSM 2839 / NBRC 102507 / CH34) (Ralstonia metallidurans).